The chain runs to 1305 residues: Cyclin-G-associated kinase (1305 aa).

Ser-2 bears the N-acetylserine mark. Ser-2 and Ser-16 each carry phosphoserine. The Protein kinase domain maps to 40-317 (LRVRRVLAEG…EVVRQLQEIA (278 aa)). Residues 46-54 (LAEGGFAFV) and Lys-69 each bind ATP. Asp-173 acts as the Proton acceptor in catalysis. Positions 397 to 564 (SVANYAKGDL…EYVCDMVAEE (168 aa)) constitute a Phosphatase tensin-type domain. Phosphoserine is present on Ser-454. One can recognise a C2 tensin-type domain in the interval 570–708 (SKPMLVKSVV…FQVNLEVEVE (139 aa)). Disordered regions lie at residues 707-732 (VEPRDRPSREAPPWENTSLRGLNPKI) and 747-854 (FGKP…AAGT). Position 768 is a phosphoserine (Ser-768). Thr-774 carries the post-translational modification Phosphothreonine. Positions 776–789 (SDSPQSSSTDTNHF) are enriched in polar residues. Ser-781 bears the Phosphoserine mark. At Thr-792 the chain carries Phosphothreonine. Residues 805-816 (LDNTSPKESQSV) show a composition bias toward polar residues. Phosphoserine occurs at positions 809, 824, and 827. Residues 822-832 (DGSEVSDEEEA) show a composition bias toward acidic residues. The segment covering 836–848 (SEERKPGAGEDTP) has biased composition (basic and acidic residues). Phosphoserine is present on Ser-938. The tract at residues 1037–1139 (DTWADTATPG…WTPQAKPAPR (103 aa)) is disordered. A compositionally biased stretch (low complexity) spans 1084 to 1099 (DLSDLSSSLQGLPAGL). The span at 1111–1132 (TQKSNSPWQANRPTAPGTSWTP) shows a compositional bias: polar residues. Residue Arg-1122 is modified to Omega-N-methylarginine. Position 1171 is a phosphoserine (Ser-1171). Residues 1241 to 1305 (SRWTPVSMAD…FENQGSRPLF (65 aa)) enclose the J domain.

Belongs to the protein kinase superfamily. Ser/Thr protein kinase family.

The protein resides in the cytoplasm. It is found in the perinuclear region. The protein localises to the golgi apparatus. Its subcellular location is the trans-Golgi network. It localises to the cell junction. The protein resides in the focal adhesion. It is found in the cytoplasmic vesicle. The protein localises to the clathrin-coated vesicle. The enzyme catalyses L-seryl-[protein] + ATP = O-phospho-L-seryl-[protein] + ADP + H(+). The catalysed reaction is L-threonyl-[protein] + ATP = O-phospho-L-threonyl-[protein] + ADP + H(+). Functionally, associates with cyclin G and CDK5. Seems to act as an auxilin homolog that is involved in the uncoating of clathrin-coated vesicles by Hsc70 in non-neuronal cells. Expression oscillates slightly during the cell cycle, peaking at G1. May play a role in clathrin-mediated endocytosis and intracellular trafficking, and in the dynamics of clathrin assembly/disassembly. The protein is Cyclin-G-associated kinase of Mus musculus (Mouse).